Reading from the N-terminus, the 130-residue chain is Small ribosomal subunit protein uS9 (130 aa).

The protein belongs to the universal ribosomal protein uS9 family.

This chain is Small ribosomal subunit protein uS9, found in Salmonella paratyphi C (strain RKS4594).